Consider the following 715-residue polypeptide: MKKQIISLGALAVASSLFTWDNKADAIVTKDYSKESRVNENSKYGTLISDWYLKGRLTSLESQFINALDILETYHYGEKEYKDAKDKLMTRILGEDQYLLERKKVQYEEYKKLYQKYKEENPTSKGLKLKTFDQYTIEDLTMREYNELTESLKSAVKDFEKDVEKIENQHHDLKPFTDEMEEKATSRVDDLANKAYSVYFAFVRDTQHKTEALELKAKVDLVLGDEDKPHRISNERIEKEMIKDLESIIEDFFIETGLNKPGNITSYDSSKHHYKNHSEGFEALVKETREAVANADESWKTKTVKKYGESETKSPVVKEENKVEDPQSPKFDNQQEVKTTAGKAEETTQPVAQPLVKIPQGTITGEIVKGPEYPTMENKTLQGEIVQGPDFPTMEQSGPSLSDNYTQPTTPNPILEGLEGSSSKLEIKPQGTESTLKGIQGESSDIEVKPQATETTEASQYGPRPQFNKTPKYVKYRDAGTGIREYNDGTFGYEARPRFNKPSETNAYNVTTNQDGTVSYGARPTQNKASETNAYNVTTHANGQVSYGARPTQKKPSETNAYNVTTHANGQVSYGARPTYNKPSETNAYNVTTHGNGQVSYGARPTYKKPSKTNAYNVTTHANGQVSYGARPTQNKPSETNAYNVTTHANGQVSYGARPTQNKPSETNAYNVTTHGNGQVSYGARPTYNKPSKTNAYNVTTHADGTATYGPRVTK.

The N-terminal stretch at 1–26 (MKKQIISLGALAVASSLFTWDNKADA) is a signal peptide. Positions 306–327 (KYGESETKSPVVKEENKVEDPQ) are enriched in basic and acidic residues. Disordered stretches follow at residues 306 to 348 (KYGE…EETT) and 430 to 470 (QGTE…FNKT). Positions 431–443 (GTESTLKGIQGES) are enriched in polar residues. A run of 8 repeats spans residues 495 to 521 (ARPR…VSYG), 522 to 548 (ARPT…VSYG), 549 to 575 (ARPT…VSYG), 576 to 602 (ARPT…VSYG), 603 to 629 (ARPT…VSYG), 630 to 656 (ARPT…VSYG), 657 to 683 (ARPT…VSYG), and 684 to 710 (ARPT…ATYG). The interval 495 to 710 (ARPRFNKPSE…THADGTATYG (216 aa)) is 8 X 27 AA tandem repeats of A-R-P-[RT]-[FQY]-[NK]-K-[PA]-S-[EK]-T-N-A-Y-N-V-T-T-[NH]-[QAG]-[DN]-G-[TQ]-[VA]-[ST]-Y-G. Positions 674-697 (THGNGQVSYGARPTYNKPSKTNAY) are disordered.

It belongs to the staphylocoagulase family.

Staphylocoagulase is an extracellular protein which specifically forms a complex with human prothrombin. This complex named staphylothrombin can clot fibrinogen without any proteolytic cleavage of prothrombin. This is Staphylocoagulase from Staphylococcus aureus.